A 525-amino-acid polypeptide reads, in one-letter code: GMP synthase [glutamine-hydrolyzing] (525 aa).

A Glutamine amidotransferase type-1 domain is found at 9–207; it reads RILILDFGSQ…VQDICGCEAL (199 aa). Residue cysteine 86 is the Nucleophile of the active site. Catalysis depends on residues histidine 181 and glutamate 183. The GMPS ATP-PPase domain maps to 208-400; it reads WTASNIVEDA…LGLPYDMVYR (193 aa). 235–241 serves as a coordination point for ATP; the sequence is SGGVDSS.

As to quaternary structure, homodimer.

The catalysed reaction is XMP + L-glutamine + ATP + H2O = GMP + L-glutamate + AMP + diphosphate + 2 H(+). It functions in the pathway purine metabolism; GMP biosynthesis; GMP from XMP (L-Gln route): step 1/1. In terms of biological role, catalyzes the synthesis of GMP from XMP. The sequence is that of GMP synthase [glutamine-hydrolyzing] from Pseudomonas putida (strain GB-1).